Reading from the N-terminus, the 485-residue chain is Homeobox protein unplugged (485 aa).

3 disordered regions span residues 1–65, 114–157, and 212–325; these read MERP…QEQE, PAGH…DTRF, and GMAQ…RRTA. Residues 54–64 show a composition bias toward acidic residues; sequence RDQEQEAEQEQ. Residues 114–128 are compositionally biased toward low complexity; that stretch reads PAGHPAAQQPQAQAQ. 2 stretches are compositionally biased toward polar residues: residues 223–234 and 254–267; these read QAHSSPAKSGSH and DSCS…SPRN. Residues 284 to 293 show a composition bias toward acidic residues; that stretch reads DSEDCSDDEG. Positions 308–317 are enriched in low complexity; it reads SQGNGSSSNS. Residues 319-378 constitute a DNA-binding region (homeobox); that stretch reads SRRRRTAFTSEQLLELEREFHAKKYLSLTERSQIATSLKLSEVQVKIWFQNRRAKWKRVK.

As to expression, expressed in the neuroectodermal and mesectodermal cells at the ventral midline of stage 8 embryos, Subsequently, expression domains in the CNS widen and have their most anterior border in the posterior deutocerebrum. Oc/otd and unpg are mutual repressors at the interface of their brain-specific expression domains. Expression fades during germ band retraction and is then restricted to subset of cells by stage 14. Expressed in the founder cells of the cerebral branch within the first tracheal metamere. Outside the CNS, expression is seen in two clusters of ectodermal cells located laterally within the labial and first thoracic segments of stage 9 embryos. By stage 13, the expression is detected in a few cells close to the dorsal midline of the embryos.

It is found in the nucleus. In terms of biological role, plays a regulatory role in neural branching of the tracheae: segment-specific aspects of these neural branching patterns appear to be generated by homeotic regulation of expression. May have a role with oc/otd in the postembryonic development of the brain. The chain is Homeobox protein unplugged from Drosophila melanogaster (Fruit fly).